The chain runs to 350 residues: Biotin synthase (350 aa).

Residues 41-265 (NEVQISRLLS…VMPLSRVRLS (225 aa)) enclose the Radical SAM core domain. C56, C60, and C63 together coordinate [4Fe-4S] cluster. The [2Fe-2S] cluster site is built by C100, C131, C191, and R263.

This sequence belongs to the radical SAM superfamily. Biotin synthase family. In terms of assembly, homodimer. Requires [4Fe-4S] cluster as cofactor. It depends on [2Fe-2S] cluster as a cofactor.

It catalyses the reaction (4R,5S)-dethiobiotin + (sulfur carrier)-SH + 2 reduced [2Fe-2S]-[ferredoxin] + 2 S-adenosyl-L-methionine = (sulfur carrier)-H + biotin + 2 5'-deoxyadenosine + 2 L-methionine + 2 oxidized [2Fe-2S]-[ferredoxin]. It participates in cofactor biosynthesis; biotin biosynthesis; biotin from 7,8-diaminononanoate: step 2/2. In terms of biological role, catalyzes the conversion of dethiobiotin (DTB) to biotin by the insertion of a sulfur atom into dethiobiotin via a radical-based mechanism. In Shewanella loihica (strain ATCC BAA-1088 / PV-4), this protein is Biotin synthase.